Consider the following 821-residue polypeptide: Xylosyltransferase 1 (821 aa).

The segment at 1–121 (YFSHRPKEKV…PETKSDQVPK (121 aa)) is disordered. Residues 1–821 (YFSHRPKEKV…GAVKPDGRLR (821 aa)) are Lumenal-facing. Residues 9–25 (KVRTDSNNENSVPKDFE) show a composition bias toward basic and acidic residues. Residues 27–36 (VDNSNFAPRT) are compositionally biased toward polar residues. Basic and acidic residues-rich tracts occupy residues 41-58 (HQPELAKKPLSRQKERLQ) and 76-87 (GPKEVLPPREKA). N90 carries an N-linked (GlcNAc...) asparagine glycan. 4 cysteine pairs are disulfide-bonded: C122–C150, C166–C407, C426–C439, and C428–C437. UDP-alpha-D-xylose contacts are provided by residues V198, D226, and 255-257 (TIW). N286 is a glycosylation site (N-linked (GlcNAc...) asparagine). Residue 359–360 (DW) participates in UDP-alpha-D-xylose binding. Residues S440 and 463–464 (RK) contribute to the UDP-alpha-D-xylose site. Cystine bridges form between C540-C789 and C782-C795. A glycan (N-linked (GlcNAc...) asparagine) is linked at N642. A disordered region spans residues 801–821 (SSFSPDPKSELGAVKPDGRLR).

The protein belongs to the glycosyltransferase 14 family. XylT subfamily. In terms of assembly, monomer. Requires a divalent metal cation as cofactor. In terms of processing, contains 7 disulfide bonds. Post-translationally, N-glycosylated.

It is found in the golgi apparatus membrane. The catalysed reaction is UDP-alpha-D-xylose + L-seryl-[protein] = 3-O-(beta-D-xylosyl)-L-seryl-[protein] + UDP + H(+). The protein operates within glycan metabolism; chondroitin sulfate biosynthesis. It functions in the pathway glycan metabolism; heparan sulfate biosynthesis. Its function is as follows. Catalyzes the first step in the biosynthesis of chondroitin sulfate and dermatan sulfate proteoglycans, such as DCN. Transfers D-xylose from UDP-D-xylose to specific serine residues of the core protein. Required for normal maturation of chondrocytes during bone development, normal onset of ossification and normal embryonic and postnatal skeleton development, especially of the long bones. The protein is Xylosyltransferase 1 (Xylt1) of Rattus norvegicus (Rat).